We begin with the raw amino-acid sequence, 255 residues long: Reaction center protein L chain (255 aa).

The next 3 helical transmembrane spans lie at 12–35, 64–92, and 95–120; these read GFFG…GTAL, GLWQ…RKLG, and LHIP…LLLG. The (7R,8Z)-bacteriochlorophyll b site is built by His133 and His153. The helical transmembrane segment at 150 to 179 threads the bilayer; the sequence is NPAHMIGITFFFTNCMAFGMHGSIILSVLN. Position 170 (His170) interacts with Fe cation. Phe196 contributes to the a ubiquinone binding site. Residues 205–231 traverse the membrane as a helical segment; sequence GTLGIHRLGVFLAISAAFWSAVCIILS. His210 is a Fe cation binding site.

It belongs to the reaction center PufL/M/PsbA/D family. As to quaternary structure, reaction center is composed of four bacteriochlorophylls, two bacteriopheophytins, two ubiquinones, one iron, and three highly hydrophobic polypeptide chains (designated L, M, and H).

It is found in the cellular chromatophore membrane. The reaction center is a membrane-bound complex that mediates the initial photochemical event in the electron transfer process of photosynthesis. This Pararhodospirillum photometricum (Rhodospirillum photometricum) protein is Reaction center protein L chain (pufL).